The sequence spans 301 residues: Envoplakin-like protein (301 aa).

A coiled-coil region spans residues 1-88 (MQASADQVER…ERVTQECAEY (88 aa)). Disordered regions lie at residues 18 to 41 (RLQQDRLNSEQSQALQHQQETGSS) and 118 to 166 (GLRR…PEPI). A compositionally biased stretch (polar residues) spans 26–41 (SEQSQALQHQQETGSS). Basic and acidic residues predominate over residues 136–151 (GAQHRAEGDQRPRRAA).

Belongs to the plakin or cytolinker family.

This chain is Envoplakin-like protein (EVPLL), found in Homo sapiens (Human).